The primary structure comprises 435 residues: Arginine biosynthesis bifunctional protein ArgJ, mitochondrial (435 aa).

Thr167, Lys193, Thr204, Glu291, Asn430, and Thr435 together coordinate substrate. The active-site Nucleophile is Thr204.

This sequence belongs to the ArgJ family. Heterodimer of an alpha and a beta chain. In terms of processing, the alpha and beta chains are autoproteolytically processed from a single precursor protein within the mitochondrion.

The protein resides in the mitochondrion matrix. The enzyme catalyses N(2)-acetyl-L-ornithine + L-glutamate = N-acetyl-L-glutamate + L-ornithine. The catalysed reaction is L-glutamate + acetyl-CoA = N-acetyl-L-glutamate + CoA + H(+). It functions in the pathway amino-acid biosynthesis; L-arginine biosynthesis; L-ornithine and N-acetyl-L-glutamate from L-glutamate and N(2)-acetyl-L-ornithine (cyclic): step 1/1. The protein operates within amino-acid biosynthesis; L-arginine biosynthesis; N(2)-acetyl-L-ornithine from L-glutamate: step 1/4. Catalyzes two activities which are involved in the cyclic version of arginine biosynthesis: the synthesis of acetylglutamate from glutamate and acetyl-CoA, and of ornithine by transacetylation between acetylornithine and glutamate. The sequence is that of Arginine biosynthesis bifunctional protein ArgJ, mitochondrial from Heterostelium pallidum (strain ATCC 26659 / Pp 5 / PN500) (Cellular slime mold).